We begin with the raw amino-acid sequence, 212 residues long: Adenylate kinase (212 aa).

10–15 (GAGKGT) provides a ligand contact to ATP. Positions 30-59 (STGDMFRAAMANQTEMGRLAKSYIDKGELV) are NMP. Residues Thr-31, Arg-36, 57-59 (ELV), 86-89 (GYPR), and Gln-93 each bind AMP. Residues 127–159 (GRIINRKTGETFHKVFNPPVDYKEEDYYQREDD) are LID. Residues Arg-128 and 137–138 (TF) contribute to the ATP site. AMP contacts are provided by Arg-156 and Arg-167. An ATP-binding site is contributed by Gln-195.

This sequence belongs to the adenylate kinase family. As to quaternary structure, monomer.

It is found in the cytoplasm. The catalysed reaction is AMP + ATP = 2 ADP. Its pathway is purine metabolism; AMP biosynthesis via salvage pathway; AMP from ADP: step 1/1. Catalyzes the reversible transfer of the terminal phosphate group between ATP and AMP. Plays an important role in cellular energy homeostasis and in adenine nucleotide metabolism. This Streptococcus pyogenes serotype M3 (strain ATCC BAA-595 / MGAS315) protein is Adenylate kinase.